A 71-amino-acid chain; its full sequence is Potassium voltage-gated channel subfamily E member 2 (71 aa).

Residues 7-27 (VILYLMVMIGMFSFIIVAILV) traverse the membrane as a helical segment. Residues 28 to 71 (STVKSKRREHSNDPYHQYIVEDWQEKYKSQILHFEEAKATIHEN) are Cytoplasmic-facing.

The protein belongs to the potassium channel KCNE family. Interacts with KCNB1. Associates with KCNH2/ERG1. May associate with KCNQ2 and KCNQ3. Associates with HCN1 and probably HCN2. Heteromultimer with KCNC2. Interacts with KCNC2. Interacts with KCNQ1; forms a heterooligomer complex that targets to the membrane raft and leading to currents with an apparently instantaneous activation, a rapid deactivation process and a linear current-voltage relationship and decreases the amplitude of the outward current. As to expression, detected in heart; expression is highest in the SA node and the right atrium, and barely detectable in the ventricle.

It is found in the cell membrane. It localises to the apical cell membrane. Its function is as follows. Ancillary protein that functions as a regulatory subunit of the voltage-gated potassium (Kv) channel complex composed of pore-forming and potassium-conducting alpha subunits and of regulatory beta subunits. KCNE2 beta subunit modulates the gating kinetics and enhances stability of the channel complex. Alters the gating of the delayed rectifier Kv channel containing KCNB1 alpha subunit. Associates with KCNH2/HERG alpha subunit Kv channel to form the rapidly activating component of the delayed rectifying potassium current (IKr) in heart. May associate with KCNQ2 and/or KCNQ3 alpha subunits to modulate the native M-type current. May associate with HCN1 and HCN2 channel subunits to increase potassium current. Forms a heterooligomer complex with KCNQ1/KVLQT1 alpha subunits which leads to currents with an apparently instantaneous activation, a rapid deactivation process and a linear current-voltage relationship and decreases the amplitude of the outward current. KCNQ1-KCNE2 channel associates with Na(+)-coupled myo-inositol symporter in the apical membrane of choroid plexus epithelium and regulates the myo-inositol gradient between blood and cerebrospinal fluid with an impact on neuron excitability. In Oryctolagus cuniculus (Rabbit), this protein is Potassium voltage-gated channel subfamily E member 2 (KCNE2).